Here is a 238-residue protein sequence, read N- to C-terminus: Probable transcriptional regulatory protein ABC1956 (238 aa).

This sequence belongs to the TACO1 family. YeeN subfamily.

It localises to the cytoplasm. The protein is Probable transcriptional regulatory protein ABC1956 of Shouchella clausii (strain KSM-K16) (Alkalihalobacillus clausii).